We begin with the raw amino-acid sequence, 140 residues long: Calcitonin (140 aa).

The first 25 residues, 1 to 25 (MGFWKFSPFLPLSILVLYQVGIIQA), serve as a signal peptide directing secretion. Positions 26 to 81 (APFRSALESLPDPAVLPEEESRLLLAALVKDYVQMKVRALEQEQETGGASLDSPRA) are excised as a propeptide. A disulfide bridge links cysteine 84 with cysteine 90. Proline 115 is modified (proline amide). A propeptide spanning residues 120 to 140 (VMARGLERDHGPHIGTSQDAY) is cleaved from the precursor.

This sequence belongs to the calcitonin family.

The protein localises to the secreted. In terms of biological role, calcitonin is a peptide hormone that causes a rapid but short-lived drop in the level of calcium and phosphate in blood by promoting the incorporation of those ions in the bones. Calcitonin function is mediated by the calcitonin receptor/CALCR and the CALCR-RAMP2 (AMYR2) receptor complex. The protein is Calcitonin (CALCA) of Equus caballus (Horse).